Here is a 338-residue protein sequence, read N- to C-terminus: 3-keto-steroid reductase erg27 (338 aa).

Leucine 16, threonine 44, lysine 50, and aspartate 75 together coordinate NADP(+). Residues serine 180 and tyrosine 203 each act as proton donor in the active site. NADP(+)-binding residues include tyrosine 203, lysine 207, and threonine 236. Lysine 207 acts as the Lowers pKa of active site Tyr in catalysis.

This sequence belongs to the short-chain dehydrogenases/reductases (SDR) family. ERG27 subfamily. As to quaternary structure, heterotetramer of erg25, erg26, erg27 and erg28. Erg28 acts as a scaffold to tether erg27 and other 4,4-demethylation-related enzymes, forming a demethylation enzyme complex, in the endoplasmic reticulum.

It carries out the reaction 3-dehydro-4alpha-methylzymosterol + NADPH + H(+) = 4alpha-methylzymosterol + NADP(+). The protein operates within steroid biosynthesis; zymosterol biosynthesis; zymosterol from lanosterol: step 5/6. It participates in steroid metabolism; ergosterol biosynthesis. Its function is as follows. 3-keto-steroid reductase; part of the third module of ergosterol biosynthesis pathway that includes by the late steps of the pathway. Erg27 is a catalytic component of the C-4 demethylation complex that catalyze the reduction of the keto group on the C-3. The third module or late pathway involves the ergosterol synthesis itself through consecutive reactions that mainly occur in the endoplasmic reticulum (ER) membrane. Firstly, the squalene synthase erg9 catalyzes the condensation of 2 farnesyl pyrophosphate moieties to form squalene, which is the precursor of all steroids. Secondly, squalene is converted into lanosterol by the consecutive action of the squalene epoxidase erg1 and the lanosterol synthase erg7. The lanosterol 14-alpha-demethylase erg11/cyp1 catalyzes C14-demethylation of lanosterol to produce 4,4'-dimethyl cholesta-8,14,24-triene-3-beta-ol. In the next steps, a complex process involving various demethylation, reduction and desaturation reactions catalyzed by the C-14 reductase erg24 and the C-4 demethylation complex erg25-erg26-erg27 leads to the production of zymosterol. Erg28 likely functions in the C-4 demethylation complex reaction by tethering erg26 and Erg27 to the endoplasmic reticulum or to facilitate interaction between these proteins. Then, the sterol 24-C-methyltransferase erg6 catalyzes the methyl transfer from S-adenosyl-methionine to the C-24 of zymosterol to form fecosterol. The C-8 sterol isomerase erg2 catalyzes the reaction which results in unsaturation at C-7 in the B ring of sterols and thus converts fecosterol to episterol. The sterol-C5-desaturases erg31 and erg32 then catalyze the introduction of a C-5 double bond in the B ring to produce 5-dehydroepisterol. The C-22 sterol desaturase erg5 further converts 5-dehydroepisterol into ergosta-5,7,22,24(28)-tetraen-3beta-ol by forming the C-22(23) double bond in the sterol side chain. Finally, ergosta-5,7,22,24(28)-tetraen-3beta-ol is substrate of the C-24(28) sterol reductase erg4 to produce ergosterol. In the genus Schizosaccharomyces, a second route exists between lanosterol and fecosterol, via the methylation of lanosterol to eburicol by erg6, followed by C14-demethylation by erg11/cyp1 and C4-demethylation by the demethylation complex erg25-erg26-erg27. This is 3-keto-steroid reductase erg27 from Schizosaccharomyces pombe (strain 972 / ATCC 24843) (Fission yeast).